Here is a 1145-residue protein sequence, read N- to C-terminus: MKPGRKSLPKKNRASNITEKMPTTSTEAQSSSSKNQDRCRSFSQELGVDDEPEEQQAPVATPKQTKKAQKTAKTTEEVKSPRKSARKSELKKPEPEEKAKEPRKSASKRKSSSLMNKDEPSTSTEAPSADVPGTSEASDEASEIQEAPENPNSALAIKKRLMGGGESSKSAPTKNPPKARKSNVKKPEKEAEALAPPEPPAEPQEAAETPAPEPLVPEKKPKIEDAPTTSSPKKSTPTSAPPTRASARVSKPNRLYADGSFNTEILGRTRITEQNPVKEAQAKESTPELADLPLPAGRRKSTAAPRAPPAPKPIPVINGVLRGYIPSVKVPLAEYEVDGEIINLNEGVNETMDTILAKVCEDGVEKHEDIDPKVVKAKKLAKIDYTKRLKLQVKKLDIQMRIKIPSTPEELGKRKRQAPKTDDFYWSAQSRTKLKGSSKEREETPAFDEESPIGGDEKRQQKARESISHLFDAEMDASIKEAKKYSVSFDKYIKPKITGALKHAKIKLMSRKRQSAEPDDFYYHELLVDQVSPSNSNVENVDVDVDIEETDDKVDPTEFEISEEGVIGIRDEAVDMAEQIALVIPRPTKHDGSPMSMDEIQMRAMEHVESRTKCLDGSLEIVLNQLGHEMAPPTRGVEEQGCQWHTVTSANAQALKNLYTIANNCTEDAITWTHQFMIENLEVHMLASYLSILKYAKRLNSSRFGYVISSTDQLDPEWTQVTSLLKSFVYKRHTEPGTEVLNNTIPYHRMTDTVFLLVPPTLTFGDHQRAPPRHHARIFRWLQSIGHQDSEFISFDEDIDATCSVAEYLSDVIVERICDKVRQKNKYRPNCNVVLVGYGASTYLIHRAANLVEGISAIISIGFPVMTSLGRRGTADDEILLTYCPTLFIVGAEGRRFNNEAITELRTSMISPSGLVVVGHSNDMILVPTSMLLRLGISQTVVFRMVLEKILDFLNLEPVRQQEFADLVPIELNNVFDLDSALLKSDKALSGLAFASSTHSASSSAAPSPVGASGRRATVTGAGSEDIAKRRKESIILSQQIAAPSISGPPPPAPSPRTEDRFLAFQNLVASTITTGDDMPRRASMGASPRVIERGDFRDHRPPPPPPLPILQNPVATPMSQQPPLPSPAPPPPRGPVDPASISLI.

Residues 1–13 are compositionally biased toward basic residues; the sequence is MKPGRKSLPKKNR. 5 disordered regions span residues 1–310, 429–464, 999–1025, 1040–1059, and 1073–1145; these read MKPG…APPA, QSRT…QKAR, HSAS…AGSE, QIAA…PRTE, and ITTG…ISLI. Residues 14–34 show a composition bias toward polar residues; the sequence is ASNITEKMPTTSTEAQSSSSK. Composition is skewed to basic and acidic residues over residues 73–104 and 216–225; these read KTTE…EPRK and VPEKKPKIED. Low complexity predominate over residues 226-248; it reads APTTSSPKKSTPTSAPPTRASAR. Basic and acidic residues predominate over residues 455–464; it reads GDEKRQQKAR. Residues 999 to 1013 are compositionally biased toward low complexity; it reads HSASSSAAPSPVGAS. The span at 1091–1102 shows a compositional bias: basic and acidic residues; the sequence is VIERGDFRDHRP. Pro residues predominate over residues 1121 to 1136; the sequence is QQPPLPSPAPPPPRGP.

In terms of biological role, influences the activity of genes involved in vulval development. This is Protein sumv-2 from Caenorhabditis elegans.